A 542-amino-acid chain; its full sequence is Peptide chain release factor 3 (542 aa).

The tr-type G domain maps to Glu14 to Ala283. Residues Ser23–Thr30, Asp91–His95, and Asn145–Asp148 contribute to the GTP site.

This sequence belongs to the TRAFAC class translation factor GTPase superfamily. Classic translation factor GTPase family. PrfC subfamily.

Its subcellular location is the cytoplasm. Its function is as follows. Increases the formation of ribosomal termination complexes and stimulates activities of RF-1 and RF-2. It binds guanine nucleotides and has strong preference for UGA stop codons. It may interact directly with the ribosome. The stimulation of RF-1 and RF-2 is significantly reduced by GTP and GDP, but not by GMP. The chain is Peptide chain release factor 3 from Cyanothece sp. (strain PCC 7425 / ATCC 29141).